Consider the following 412-residue polypeptide: Lipid droplet organization protein LDO45 (412 aa).

Residues Met1–Asn170 lie on the Cytoplasmic side of the membrane. Residues Ser171–Gly191 traverse the membrane as a helical segment. Topologically, residues Asp192–Lys247 are lumenal. Residues Val248–Thr268 form a helical membrane-spanning segment. Over Ala269–Phe271 the chain is Cytoplasmic. The helical transmembrane segment at Phe272–Ile292 threads the bilayer. A topological domain (lumenal) is located at residue Pro293. A helical membrane pass occupies residues Leu294 to Met314. Residues Ser315–Ser412 lie on the Cytoplasmic side of the membrane. Positions Gln347–Pro374 are disordered. Polar residues predominate over residues Arg357 to Arg373.

Interacts specifically with the seipin complex FLD1-LDB16. Only a fraction appears to associate with the seipin core components, suggesting that it may be an ancillary subunit of the complex.

It localises to the endoplasmic reticulum membrane. Its subcellular location is the lipid droplet. Its function is as follows. Involved in lipid droplet (LD) organization. Modulates triglyceride (TAG) storage by reducing DGA1 LD localization. Promotes LD targeting of some proteins, including PDR16. The chain is Lipid droplet organization protein LDO45 from Saccharomyces cerevisiae (strain ATCC 204508 / S288c) (Baker's yeast).